The sequence spans 235 residues: Transmembrane protein 215 (235 aa).

The next 2 helical transmembrane spans lie at 12–32 and 40–60; these read LVVA…VSGM and IPLL…IALA. The interval 99–158 is disordered; sequence SDLESGKGSSDELAKKAGLRGKPSLQGQGELPMASSITTPTPMEEGECQSPGQSGRREET.

It is found in the membrane. This is Transmembrane protein 215 (TMEM215) from Bos taurus (Bovine).